Consider the following 340-residue polypeptide: S-adenosylmethionine:tRNA ribosyltransferase-isomerase (340 aa).

This sequence belongs to the QueA family. As to quaternary structure, monomer.

The protein resides in the cytoplasm. The catalysed reaction is 7-aminomethyl-7-carbaguanosine(34) in tRNA + S-adenosyl-L-methionine = epoxyqueuosine(34) in tRNA + adenine + L-methionine + 2 H(+). The protein operates within tRNA modification; tRNA-queuosine biosynthesis. Functionally, transfers and isomerizes the ribose moiety from AdoMet to the 7-aminomethyl group of 7-deazaguanine (preQ1-tRNA) to give epoxyqueuosine (oQ-tRNA). This is S-adenosylmethionine:tRNA ribosyltransferase-isomerase from Francisella tularensis subsp. holarctica (strain OSU18).